The chain runs to 266 residues: uncharacterized protein (266 aa).

A run of 4 helical transmembrane segments spans residues 9-29 (IFII…IELP), 79-99 (GIMT…INPF), 122-142 (LSVM…MLSG), and 193-213 (GWYL…MVFI).

Its subcellular location is the membrane. This is an uncharacterized protein from Dictyostelium discoideum (Social amoeba).